The primary structure comprises 297 residues: Transcription factor bHLH129 (297 aa).

A disordered region spans residues 1–145 (MYPPNSSKST…SSSHQEHNSL (145 aa)). A Phosphoserine modification is found at S35. Low complexity predominate over residues 68–82 (SSIGFDSNASSSSSL). Residues 111–121 (PNGGYGGGGEQ) are compositionally biased toward gly residues. Phosphoserine is present on S138. In terms of domain architecture, bHLH spans 239-289 (FATHPRSIAERERRTRISGKLKKLQELVPNMDKQTSYADMLDLAVEHIKGL).

In terms of assembly, homodimer.

The protein localises to the nucleus. The protein is Transcription factor bHLH129 (BHLH129) of Arabidopsis thaliana (Mouse-ear cress).